Here is a 158-residue protein sequence, read N- to C-terminus: MSHGKGTDMLPEIAAAVGFLSSLLRTRGCVSEQRLKVFSGALQEALTEHYKHHWFPEKPSKGSGYRCIRINHKMDPIISRVASQIGLSQPQLHQLLPSELTLWVDPYEVSYRIGEDGSICVLYEEAPLAASCGLLTCKNQVLLGRSSPSKNYVMAVSS.

Serine 147 bears the Phosphoserine; by MAPK1 and MAPK3 mark. Phosphoserine; by MAPK14 is present on serine 149.

The protein belongs to the BTG family. As to quaternary structure, interacts with PRKCABP. Interacts with CNOT7 and CNOT8; indicative for an association with the CCR4-NOT complex. Interacts with PIN1, inducing mitochondrial depolarization. Phosphorylated at Ser-147 by MAPK1/ERK2 and MAPK3/ERK1, and at Ser-149 by MAPK14, leading to PIN1-binding and mitochondrial depolarization.

Its function is as follows. Anti-proliferative protein; the function is mediated by association with deadenylase subunits of the CCR4-NOT complex. Activates mRNA deadenylation in a CNOT6 and CNOT7-dependent manner. In vitro can inhibit deadenylase activity of CNOT7 and CNOT8. Involved in cell cycle regulation. Could be involved in the growth arrest and differentiation of the neuronal precursors. Modulates transcription regulation mediated by ESR1. Involved in mitochondrial depolarization and neurite outgrowth. This is Protein BTG2 (BTG2) from Homo sapiens (Human).